Reading from the N-terminus, the 789-residue chain is Disintegrin and metalloproteinase domain-containing protein 7 (789 aa).

Residues 1–23 (MLTTGIFWMTVLISHIQERGIVG) form the signal peptide. Positions 24-176 (VEGQELVHPK…NHSCVGLNFT (153 aa)) are excised as a propeptide. Residues 24-667 (VEGQELVHPK…EWGEALNLTS (644 aa)) lie on the Extracellular side of the membrane. N-linked (GlcNAc...) asparagine glycosylation is found at Asn-84, Asn-167, and Asn-174. The Peptidase M12B domain occupies 199-393 (KFIELFVVAD…QKPACILNNP (195 aa)). 4 disulfides stabilise this stretch: Cys-310/Cys-388, Cys-350/Cys-372, Cys-352/Cys-357, and Cys-459/Cys-479. The Disintegrin domain maps to 401-487 (YPFCGNKKVD…ECPKDEFQAN (87 aa)). Residues Asn-583, Asn-628, and Asn-664 are each glycosylated (N-linked (GlcNAc...) asparagine). The chain crosses the membrane as a helical span at residues 668–689 (VSIMVIVLVMVIIGVGLVILLI). At 690–789 (RYQKCIKMKQ…DTQSGCERLG (100 aa)) the chain is on the cytoplasmic side. The disordered stretch occupies residues 764–789 (RGIADPKQTDNVNLNLDTQSGCERLG). Polar residues predominate over residues 772–789 (TDNVNLNLDTQSGCERLG).

In terms of assembly, interacts with ITM2B in sperm; the interaction increases following capacitation. Interacts with HSPA5 and CANX. In terms of tissue distribution, expressed in both the head and tails of sperm (at protein level). Expressed in the epididymis (at protein level). Abundantly expressed in the apical region of the proximal caput epididymal epithelium, with decreasing expression in the mid and distal caput epididymal epithelium.

The protein resides in the membrane. Functionally, required for normal male fertility via maintenance of epithelial cell morphology in the caput epididymis and subsequently correct epididymis lumen structure required for sperm development. Plays a role in sperm motility, flagella morphology and tyrosine phosphorylation during sperm capacitance. Plays a role in normal expression levels of HSPA5, ITM2B and ADAM2 in sperm both prior to and post-capacitation. This is a non catalytic metalloprotease-like protein. The protein is Disintegrin and metalloproteinase domain-containing protein 7 of Mus musculus (Mouse).